Reading from the N-terminus, the 333-residue chain is Ribose-phosphate pyrophosphokinase (333 aa).

Residue 58-60 (DGE) participates in ATP binding. Residues His-151 and Asp-190 each coordinate Mg(2+). Lys-214 is a catalytic residue. D-ribose 5-phosphate is bound by residues Arg-216, Asp-240, and 244–248 (DTAGT).

This sequence belongs to the ribose-phosphate pyrophosphokinase family. Class I subfamily. As to quaternary structure, homohexamer. Mg(2+) serves as cofactor.

It localises to the cytoplasm. The enzyme catalyses D-ribose 5-phosphate + ATP = 5-phospho-alpha-D-ribose 1-diphosphate + AMP + H(+). It functions in the pathway metabolic intermediate biosynthesis; 5-phospho-alpha-D-ribose 1-diphosphate biosynthesis; 5-phospho-alpha-D-ribose 1-diphosphate from D-ribose 5-phosphate (route I): step 1/1. Functionally, involved in the biosynthesis of the central metabolite phospho-alpha-D-ribosyl-1-pyrophosphate (PRPP) via the transfer of pyrophosphoryl group from ATP to 1-hydroxyl of ribose-5-phosphate (Rib-5-P). The sequence is that of Ribose-phosphate pyrophosphokinase from Synechocystis sp. (strain ATCC 27184 / PCC 6803 / Kazusa).